The primary structure comprises 492 residues: MTLWINGDWITGQGASRVKRNPVSGEVLWQGNDADAAQVEQACRAARAAFPRWARLSLAERQVVVERFAGLLESNKAELTAIIARETGKPRWEAATEVTAMINKIAISIKAYHVRTGEQRSEMPDGAASLRHRPHGVLAVFGPYNFPGHLPNGHIVPALLAGNTIIFKPSELTPWSGEAVMRLWQQAGLPPGVLNLVQGGRETGQALSALEDLDGLLFTGRANTGYQLHRQLSGQPEKILALEMGGNNPLIIDEVADIDAAVHLTIQSAFVTAGQRCTCARRLLLKSGAQGDAFLARLVAVSQRLTPGNWDDEPQPFIGGLISEQAAQQVVTAWQQLEAMGGRTLLAPRLLQSETSLLTPGIIEMTGVAGVPDEEVFGPLLRVWRYDSFEEAILMANNTRFGLSCGLVSPEREKFDQLLLEARAGIVNWNKPLTGAASTAPFGGIGASGNHRPSAWYAADYCAWPMASLESDSLTLPATLNPGLDFSDEVVR.

Residue 220-225 participates in NAD(+) binding; that stretch reads GRANTG. Active-site residues include Glu-243 and Cys-277.

It belongs to the aldehyde dehydrogenase family. AstD subfamily.

The catalysed reaction is N-succinyl-L-glutamate 5-semialdehyde + NAD(+) + H2O = N-succinyl-L-glutamate + NADH + 2 H(+). It functions in the pathway amino-acid degradation; L-arginine degradation via AST pathway; L-glutamate and succinate from L-arginine: step 4/5. Its function is as follows. Catalyzes the NAD-dependent reduction of succinylglutamate semialdehyde into succinylglutamate. The chain is N-succinylglutamate 5-semialdehyde dehydrogenase from Shigella boydii serotype 18 (strain CDC 3083-94 / BS512).